A 335-amino-acid chain; its full sequence is UPF0353 protein MAV335 (335 aa).

2 helical membrane passes run 18–38 (WFFLFLLVVAGLAALYILMQL) and 67–87 (LPAILLVASLVLFTIAMAGPT). A VWFA domain is found at 98-295 (VVMLVIDVSQ…QELKSVYATL (198 aa)). Residues 309–329 (SVGWVRLGALVLRLAADALLI) form a helical membrane-spanning segment.

Belongs to the UPF0353 family.

It is found in the cell membrane. The polypeptide is UPF0353 protein MAV335 (Mycobacterium avium).